We begin with the raw amino-acid sequence, 226 residues long: Chalcone--flavanone isomerase 1 (226 aa).

Residues threonine 52, asparagine 117, and threonine 194 each contribute to the substrate site.

The protein belongs to the chalcone isomerase family.

It carries out the reaction a chalcone = a flavanone.. It functions in the pathway secondary metabolite biosynthesis; flavonoid biosynthesis. Its function is as follows. Catalyzes the intramolecular cyclization of bicyclic chalcones into tricyclic (S)-flavanones. Responsible for the isomerization of 4,2',4',6'-tetrahydroxychalcone (also termed chalcone) into naringenin. The chain is Chalcone--flavanone isomerase 1 (CHI1) from Lotus japonicus (Lotus corniculatus var. japonicus).